We begin with the raw amino-acid sequence, 352 residues long: Probable transcription factor At1g11510 (352 aa).

Disordered stretches follow at residues 1–132 (MSRR…GGEE) and 239–269 (MKSNEKSKKSSKFESVKHELDSSLPNSKNNC). Positions 56-66 (SGSDEETDSDS) are enriched in acidic residues. Composition is skewed to basic and acidic residues over residues 89–101 (KTSEKSGAKRSLE), 117–132 (VSGEEEKKKSGGGGEE), and 241–259 (SNEKSKKSSKFESVKHELD).

The protein belongs to the GeBP family.

This chain is Probable transcription factor At1g11510, found in Arabidopsis thaliana (Mouse-ear cress).